The following is a 914-amino-acid chain: Ubiquitin carboxyl-terminal hydrolase 33 (914 aa).

The UBP-type zinc finger occupies 6-109 (NHCPHLDSVG…PSLPHVRQPH (104 aa)). Residues Cys8, His10, Cys30, Cys33, Cys43, Cys48, Cys53, His60, His64, His70, Cys83, and Cys86 each coordinate Zn(2+). Positions 154–683 (TGLKNIGNTC…EAYVLFYRKS (530 aa)) constitute a USP domain. The Nucleophile role is filled by Cys163. Residues 266 to 313 (PQTITTEETMEEDKSQSDVDFQSCESCSNSDKAENENGSSCFSEDNNE) are disordered. Polar residues predominate over residues 283 to 313 (DVDFQSCESCSNSDKAENENGSSCFSEDNNE). Phosphoserine occurs at positions 345 and 407. The span at 387 to 410 (DLSTPQILPSNESINPRLSASPPK) shows a compositional bias: polar residues. Residues 387 to 437 (DLSTPQILPSNESINPRLSASPPKSGNLWPGLAPPHKKAQSASPKRKKQHK) are disordered. Positions 421–437 (PHKKAQSASPKRKKQHK) are enriched in basic residues. His641 functions as the Proton acceptor in the catalytic mechanism. 2 DUSP domains span residues 685 to 778 (EEAQ…LYIC) and 786 to 893 (EEIE…RPPV).

Belongs to the peptidase C19 family. USP20/USP33 subfamily. As to quaternary structure, interacts with VHL, leading to its ubiquitination and subsequent degradation. Interacts with ARRB1 and ARRB2. Interacts with ADRB2. Interacts with DIO2. Interacts with ROBO1. Interacts with SELENBP1; in a selenium-dependent manner. Interacts with CCP110. Post-translationally, ubiquitinated via a VHL-dependent pathway for proteasomal degradation.

The protein localises to the cytoplasm. It is found in the perinuclear region. The protein resides in the cytoskeleton. Its subcellular location is the microtubule organizing center. It localises to the centrosome. It catalyses the reaction Thiol-dependent hydrolysis of ester, thioester, amide, peptide and isopeptide bonds formed by the C-terminal Gly of ubiquitin (a 76-residue protein attached to proteins as an intracellular targeting signal).. Its function is as follows. Deubiquitinating enzyme involved in various processes such as centrosome duplication, cellular migration and beta-2 adrenergic receptor/ADRB2 recycling. Involved in regulation of centrosome duplication by mediating deubiquitination of CCP110 in S and G2/M phase, leading to stabilize CCP110 during the period which centrioles duplicate and elongate. Involved in cell migration via its interaction with intracellular domain of ROBO1, leading to regulate the Slit signaling. Plays a role in commissural axon guidance cross the ventral midline of the neural tube in a Slit-dependent manner, possibly by mediating the deubiquitination of ROBO1. Acts as a regulator of G-protein coupled receptor (GPCR) signaling by mediating the deubiquitination of beta-arrestins (ARRB1 and ARRB2) and beta-2 adrenergic receptor (ADRB2). Plays a central role in ADRB2 recycling and resensitization after prolonged agonist stimulation by constitutively binding ADRB2, mediating deubiquitination of ADRB2 and inhibiting lysosomal trafficking of ADRB2. Upon dissociation, it is probably transferred to the translocated beta-arrestins, leading to beta-arrestins deubiquitination and disengagement from ADRB2. This suggests the existence of a dynamic exchange between the ADRB2 and beta-arrestins. Deubiquitinates DIO2, thereby regulating thyroid hormone regulation. Mediates deubiquitination of both 'Lys-48'- and 'Lys-63'-linked polyubiquitin chains. The sequence is that of Ubiquitin carboxyl-terminal hydrolase 33 (USP33) from Pongo abelii (Sumatran orangutan).